A 520-amino-acid polypeptide reads, in one-letter code: 4-hydroxyphenylacetate 3-monooxygenase oxygenase component (520 aa).

It belongs to the FADH(2)-utilizing monooxygenase family. As to quaternary structure, 4-HPA 3-monooxygenase consists of a reductase component HpaC and an oxygenase component HpaB.

The catalysed reaction is 4-hydroxyphenylacetate + FADH2 + O2 = 3,4-dihydroxyphenylacetate + FAD + H2O + H(+). Its pathway is aromatic compound metabolism; 4-hydroxyphenylacetate degradation; pyruvate and succinate semialdehyde from 4-hydroxyphenylacetate: step 1/7. Functionally, utilizes FADH(2) supplied by HpaC or by another flavin reductase, to catalyze the hydroxylation of 4-hydroxyphenylacetic acid, leading to the production of 3,4-DHPA. Can also oxidize phenol to catechol, and hydroxylate other phenol derivatives. The protein is 4-hydroxyphenylacetate 3-monooxygenase oxygenase component (hpaB) of Escherichia coli.